A 341-amino-acid chain; its full sequence is S-adenosylmethionine:tRNA ribosyltransferase-isomerase (341 aa).

It belongs to the QueA family. In terms of assembly, monomer.

Its subcellular location is the cytoplasm. It carries out the reaction 7-aminomethyl-7-carbaguanosine(34) in tRNA + S-adenosyl-L-methionine = epoxyqueuosine(34) in tRNA + adenine + L-methionine + 2 H(+). It participates in tRNA modification; tRNA-queuosine biosynthesis. In terms of biological role, transfers and isomerizes the ribose moiety from AdoMet to the 7-aminomethyl group of 7-deazaguanine (preQ1-tRNA) to give epoxyqueuosine (oQ-tRNA). The chain is S-adenosylmethionine:tRNA ribosyltransferase-isomerase from Staphylococcus epidermidis (strain ATCC 12228 / FDA PCI 1200).